We begin with the raw amino-acid sequence, 147 residues long: SPI-1 type 3 secretion system pilotin (147 aa).

The signal sequence occupies residues 1-15 (MKKFYSCLPVFLLIG). Residue C16 is the site of N-palmitoyl cysteine attachment. C16 is lipidated: S-diacylglycerol cysteine.

It belongs to the InvH family.

The protein localises to the cell outer membrane. In terms of biological role, involved in the synthesis of the type III secretion system (T3SS), also called injectisome, which is used to inject bacterial effector proteins into eukaryotic host cells. Pilot protein that is required for the proper localization of the secretin InvG/SctC in the outer membrane. Necessary for efficient adherence and entry of these organisms into cultured epithelial cells. This chain is SPI-1 type 3 secretion system pilotin, found in Salmonella typhimurium (strain SL1344).